The sequence spans 776 residues: DNA ligase (776 aa).

Residues 31 to 35 and 80 to 81 contribute to the NAD(+) site; these read DAEYD and SL. Lysine 114 serves as the catalytic N6-AMP-lysine intermediate. The NAD(+) site is built by arginine 135, glutamate 172, lysine 288, and lysine 312. Positions 406, 409, 436, and 442 each coordinate Zn(2+). The BRCT domain occupies 693-776; sequence AEGLPLAGQT…TFLAEQGIVV (84 aa).

The protein belongs to the NAD-dependent DNA ligase family. LigA subfamily. The cofactor is Mg(2+). Mn(2+) is required as a cofactor.

The enzyme catalyses NAD(+) + (deoxyribonucleotide)n-3'-hydroxyl + 5'-phospho-(deoxyribonucleotide)m = (deoxyribonucleotide)n+m + AMP + beta-nicotinamide D-nucleotide.. Its function is as follows. DNA ligase that catalyzes the formation of phosphodiester linkages between 5'-phosphoryl and 3'-hydroxyl groups in double-stranded DNA using NAD as a coenzyme and as the energy source for the reaction. It is essential for DNA replication and repair of damaged DNA. This is DNA ligase from Pseudomonas putida (strain GB-1).